Reading from the N-terminus, the 272-residue chain is MSPATVLDSILEGVRADVAAREASVSLSEIKAAAAAAPPPLDVMAALREPGIGVIAEVKRASPSAGALATIADPAKLAQAYQDGGARIVSVVTEQRRFQGSLDDLDAVRASVSIPVLRKDFVVQPYQIHEARAHGADMLLLIVAALEQSVLVSMLDRTESLGMTALVEVHTEQEADRALKAGAKVIGVNARDLMTLDVDRDCFARIAPGLPSSVIRIAESGVRGTADLLAYAGAGADAVLVGEGLVTSGDPRAAVADLVTAGTHPSCPKPAR.

The protein belongs to the TrpC family.

The enzyme catalyses 1-(2-carboxyphenylamino)-1-deoxy-D-ribulose 5-phosphate + H(+) = (1S,2R)-1-C-(indol-3-yl)glycerol 3-phosphate + CO2 + H2O. It participates in amino-acid biosynthesis; L-tryptophan biosynthesis; L-tryptophan from chorismate: step 4/5. In Mycobacterium tuberculosis (strain ATCC 25177 / H37Ra), this protein is Indole-3-glycerol phosphate synthase.